Here is a 255-residue protein sequence, read N- to C-terminus: Venom allergen-1 (255 aa).

Positions 1–21 (MASHVIVKFITAAILIGSCYA) are cleaved as a signal peptide. The SCP domain occupies 65–210 (LKKHNELRAE…VIKYYLVCNY (146 aa)). Residues asparagine 146 and asparagine 209 are each glycosylated (N-linked (GlcNAc...) asparagine).

The protein belongs to the CRISP family. Interacts with human LRPPRC; the interaction interrupts association between BECN1 and LRPPRC. Interacts with human CD4. In terms of assembly, (Microbial infection) Interacts with Zika virus envelope protein E and Zika virus-like particles; the interaction does not affect Zika virus replication in human endothelial cells and keratinocytes. Saliva (at protein level). Female salivary gland. No or low-level expression in female hemolymph, midgut, Malpighian tubule system and ovary. No or low-level expression in male tissues.

It is found in the secreted. It localises to the host endosome. Its subcellular location is the host mitochondrion. Its function is as follows. Activates autophagy in human monocytic cells, dendritic cells and macrophages. Promotes activation of human CD4(+) T-cells. Does not affect cytokine expression in human monocytic cells. (Microbial infection) Promotes dengue virus type 2 replication in human monocytic cells, dendritic cells and macrophages. Pro-viral properties are linked to BECN1-mediated autophagy activation in the host. Does not directly interact with the purified envelope protein of dengue virus type 2. In terms of biological role, (Microbial infection) Promotes Zika virus replication in human monocytic cells, dendritic cells and macrophages. Facilitates Zika virus transmission from infected mosquitoes to the host in mouse model. Pro-viral properties are linked to BECN1-mediated autophagy activation in the host. Does not affect Zika virus replication in human endothelial cells and keratinocytes. Functionally, (Microbial infection) Promotes Semliki Forest virus replication in human monocytic cells. Its function is as follows. (Microbial infection) Does not influence Batai virus replication in human monocytic cells. The sequence is that of Venom allergen-1 from Aedes aegypti (Yellowfever mosquito).